Reading from the N-terminus, the 64-residue chain is Peptide Ctri9677 (64 aa).

The signal sequence occupies residues 1–22 (MKNNTILFTFLIVFLIASQIEA). The residue at position 36 (leucine 36) is a Leucine amide. Positions 40-64 (SEDREFFDFFTDDNLAALEKALKEY) are excised as a propeptide.

This sequence belongs to the non-disulfide-bridged peptide (NDBP) superfamily. Short antimicrobial peptide (group 4) family. Expressed by the venom gland.

It localises to the secreted. Its function is as follows. Antimicrobial peptide. This chain is Peptide Ctri9677, found in Chaerilus tricostatus (Scorpion).